Consider the following 261-residue polypeptide: Uridine-cytidine kinase 2 (261 aa).

The segment covering Met1–Asn16 has biased composition (polar residues). Residues Met1 to Gly24 form a disordered region. An N-acetylalanine modification is found at Ala2. Gly27 to Ser35 is an ATP binding site. Residues Asp84, Tyr112, His117, Arg166, Arg176, and Gln184 each contribute to the substrate site. An ATP-binding site is contributed by Asp213. The segment at Arg236–His261 is disordered. Ser254 carries the phosphoserine modification.

It belongs to the uridine kinase family. In terms of assembly, homotetramer. As to expression, according to PubMed:8812458; testis-specific. According to PubMed:11306702, placenta-specific.

It catalyses the reaction uridine + ATP = UMP + ADP + H(+). The catalysed reaction is cytidine + ATP = CMP + ADP + H(+). It participates in pyrimidine metabolism; CTP biosynthesis via salvage pathway; CTP from cytidine: step 1/3. The protein operates within pyrimidine metabolism; UMP biosynthesis via salvage pathway; UMP from uridine: step 1/1. Phosphorylates uridine and cytidine to uridine monophosphate and cytidine monophosphate. Does not phosphorylate deoxyribonucleosides or purine ribonucleosides. Can use ATP or GTP as a phosphate donor. Can also phosphorylate cytidine and uridine nucleoside analogs such as 6-azauridine, 5-fluorouridine, 4-thiouridine, 5-bromouridine, N(4)-acetylcytidine, N(4)-benzoylcytidine, 5-fluorocytidine, 2-thiocytidine, 5-methylcytidine, and N(4)-anisoylcytidine. The chain is Uridine-cytidine kinase 2 (UCK2) from Homo sapiens (Human).